The primary structure comprises 158 residues: Endoribonuclease YbeY (158 aa).

Residues His-118, His-122, and His-128 each coordinate Zn(2+).

Belongs to the endoribonuclease YbeY family. The cofactor is Zn(2+).

It localises to the cytoplasm. Single strand-specific metallo-endoribonuclease involved in late-stage 70S ribosome quality control and in maturation of the 3' terminus of the 16S rRNA. The sequence is that of Endoribonuclease YbeY from Alteromonas mediterranea (strain DSM 17117 / CIP 110805 / LMG 28347 / Deep ecotype).